The following is a 132-amino-acid chain: ATP synthase epsilon chain (132 aa).

The segment covering 88 to 102 (IDKERAEAARQRAQE) has biased composition (basic and acidic residues). Residues 88–112 (IDKERAEAARQRAQERLNSQSDDTD) are disordered.

This sequence belongs to the ATPase epsilon chain family. As to quaternary structure, F-type ATPases have 2 components, CF(1) - the catalytic core - and CF(0) - the membrane proton channel. CF(1) has five subunits: alpha(3), beta(3), gamma(1), delta(1), epsilon(1). CF(0) has three main subunits: a, b and c. The F(1)F(0) complex interacts with SpoIIIJ and YqjG; YqgA is found in the same complex.

The protein resides in the cell membrane. Its function is as follows. Produces ATP from ADP in the presence of a proton gradient across the membrane. The polypeptide is ATP synthase epsilon chain (atpC) (Bacillus subtilis (strain 168)).